The following is a 139-amino-acid chain: MTRILATGTFDLLHPGHIYFLTQARALGDELFVIVARDSNVTHKPKPIVSEEQRLEMVNALGIVDKALLGSEKDMFEPLKHIRPDIIALGYDQRFNAENLEEELAKRGLPANVVRIPLSKECPLCSTGAIIKEVLKRYG.

ATP contacts are provided by residues 9 to 10, 14 to 17, and Asp-92; these read TF and HPGH.

It belongs to the archaeal FAD synthase family. Homodimer. A divalent metal cation is required as a cofactor.

It carries out the reaction FMN + ATP + H(+) = FAD + diphosphate. It functions in the pathway cofactor biosynthesis; FAD biosynthesis; FAD from FMN: step 1/1. Functionally, catalyzes the transfer of the AMP portion of ATP to flavin mononucleotide (FMN) to produce flavin adenine dinucleotide (FAD) coenzyme. This is FAD synthase from Methanosarcina barkeri (strain Fusaro / DSM 804).